The primary structure comprises 70 residues: Turripeptide Gsp9.3 (70 aa).

Positions 1 to 20 are cleaved as a signal peptide; that stretch reads MKVYCLLLVLLVGLVSQAHG. Residues 21 to 70 enclose the Kazal-like domain; it reads QLDKKCQMVCTFDYRPVCGSDGRTYPNKCTLTSTACMSQRSITVFHDGEC. Intrachain disulfides connect C26–C56, C30–C49, and C38–C70.

The protein belongs to the conopeptide P-like superfamily. Expressed by the venom duct.

It localises to the secreted. In terms of biological role, acts as a neurotoxin by inhibiting an ion channel. May also act as a serine protease inhibitor, since it possess the kazal serine protease inhibitor signature. The polypeptide is Turripeptide Gsp9.3 (Gemmula speciosa (Splendid gem-turris)).